A 687-amino-acid chain; its full sequence is Chloride channel protein ClC-Kb (687 aa).

The Cytoplasmic portion of the chain corresponds to 1-50 (MEEFVGLREGSSGNPVTLQELWGPCPRIRRGIRGGLEWLKQKLFRLGEDW). Helical transmembrane passes span 51–82 (YFLM…QWLY) and 91–111 (LRYL…SGFS). An intramembrane region (helical) is located at residues 116–127 (PSSGGSGIPEVK). Residue serine 121 coordinates chloride. A run of 2 helical transmembrane segments spans residues 141–160 (IKNF…CGST) and 161–180 (LFLG…AAYL). Asparagine 193 carries an N-linked (GlcNAc...) asparagine glycan. Residues 203–224 (AAAAVGVATVFAAPFSGVLFSI) constitute an intramembrane region (helical). Residues 236–255 (YWRGFFAATCGAFMFRLLAV) traverse the membrane as a helical segment. Residues glutamate 259, glutamate 261, aspartate 278, and glutamate 281 each contribute to the Ca(2+) site. The next 2 helical transmembrane spans lie at 282–310 (IFFF…FGFI) and 325–342 (PVYS…TYPP). The helical intramembrane region spans 349-360 (ASRLSMKQHLDS). 2 consecutive transmembrane segments (helical) span residues 400–420 (GTLA…TTIP) and 421–440 (MPAG…GRLF). Phenylalanine 426 serves as a coordination point for chloride. Residues 464-496 (GGYALAGAAAFSGAVTHTISTALLAFEVTGQIV) constitute an intramembrane region (helical). The helical transmembrane segment at 500-520 (PVLMAVLAANAIAQSCQPSFY) threads the bilayer. Topologically, residues 521–687 (DGTVIVKKLP…SNLTNPPAPK (167 aa)) are cytoplasmic. 2 consecutive CBS domains span residues 551–609 (MNHS…EPPS) and 626–684 (CPTE…TNPP).

Belongs to the chloride channel (TC 2.A.49) family. CLCNKB subfamily. Homodimer. Interacts with BSND. In terms of processing, N-glycosylated.

Its subcellular location is the basolateral cell membrane. It catalyses the reaction chloride(in) = chloride(out). It carries out the reaction iodide(out) = iodide(in). The catalysed reaction is nitrate(in) = nitrate(out). The enzyme catalyses bromide(in) = bromide(out). Its activity is regulated as follows. Activated by extracellular Ca(2+) and inhibited by extracellular acidic pH. Its function is as follows. Anion-selective channel permeable to small monovalent anions with ion selectivity for chloride &gt; bromide &gt; nitrate &gt; iodide. Forms a homodimeric channel where each subunit has its own ion conduction pathway. May conduct double-barreled currents controlled by two types of gates, two fast gates that control each subunit independently and a slow common gate that opens and shuts off both subunits simultaneously. Assembles with the regulatory subunit BSND/Barttin for sorting at the basolateral plasma membrane domain and functional switch to the ion conducting state. CLCNKB:BSND channels display mostly a linear current-voltage relationship controlled by common gate. Mediates chloride conductance along nephron segments, namely the thick ascending limb of Henle's loop, convoluted tubule and the collecting duct, contributing to the maintenance of systemic acid-base and electrolyte homeostasis. Conducts chloride currents in the stria vascularis of the inner ear to establish the endocochlear potential necessary for normal hearing. The sequence is that of Chloride channel protein ClC-Kb from Homo sapiens (Human).